Reading from the N-terminus, the 150-residue chain is Large ribosomal subunit protein bL9 (150 aa).

Belongs to the bacterial ribosomal protein bL9 family.

In terms of biological role, binds to the 23S rRNA. The polypeptide is Large ribosomal subunit protein bL9 (Corynebacterium efficiens (strain DSM 44549 / YS-314 / AJ 12310 / JCM 11189 / NBRC 100395)).